The chain runs to 180 residues: Regulator of G-protein signaling 8 (180 aa).

Serine 26 bears the Phosphoserine mark. One can recognise an RGS domain in the interval 56 to 171; the sequence is SFDVLLSHKY…FLRSKMYLDL (116 aa).

Interacts with GNAO1 and GNAI3.

The protein resides in the cell membrane. Its subcellular location is the membrane. It localises to the perikaryon. It is found in the cell projection. The protein localises to the dendrite. The protein resides in the nucleus. Its function is as follows. Regulates G protein-coupled receptor signaling cascades, including signaling via muscarinic acetylcholine receptor CHRM2 and dopamine receptor DRD2. Inhibits signal transduction by increasing the GTPase activity of G protein alpha subunits, thereby driving them into their inactive GDP-bound form. Modulates the activity of potassium channels that are activated in response to DRD2 and CHRM2 signaling. This Mus musculus (Mouse) protein is Regulator of G-protein signaling 8 (Rgs8).